Reading from the N-terminus, the 512-residue chain is D-alanine--D-alanyl carrier protein ligase (512 aa).

152–153 (TS) lines the ATP pocket. Aspartate 199 lines the D-alanine pocket. ATP is bound at residue 294–299 (NAYGPT). Valine 303 provides a ligand contact to D-alanine. ATP-binding positions include aspartate 385, 397-400 (YGGR), and lysine 499. Lysine 499 provides a ligand contact to D-alanine.

It belongs to the ATP-dependent AMP-binding enzyme family. DltA subfamily.

It is found in the cytoplasm. The catalysed reaction is holo-[D-alanyl-carrier protein] + D-alanine + ATP = D-alanyl-[D-alanyl-carrier protein] + AMP + diphosphate. It functions in the pathway cell wall biogenesis; lipoteichoic acid biosynthesis. Functionally, catalyzes the first step in the D-alanylation of lipoteichoic acid (LTA), the activation of D-alanine and its transfer onto the D-alanyl carrier protein (Dcp) DltC. In an ATP-dependent two-step reaction, forms a high energy D-alanyl-AMP intermediate, followed by transfer of the D-alanyl residue as a thiol ester to the phosphopantheinyl prosthetic group of the Dcp. D-alanylation of LTA plays an important role in modulating the properties of the cell wall in Gram-positive bacteria, influencing the net charge of the cell wall. This chain is D-alanine--D-alanyl carrier protein ligase, found in Streptococcus pyogenes serotype M28 (strain MGAS6180).